The primary structure comprises 156 residues: Small ribosomal subunit protein uS7 (156 aa).

The protein belongs to the universal ribosomal protein uS7 family. Part of the 30S ribosomal subunit. Contacts proteins S9 and S11.

One of the primary rRNA binding proteins, it binds directly to 16S rRNA where it nucleates assembly of the head domain of the 30S subunit. Is located at the subunit interface close to the decoding center, probably blocks exit of the E-site tRNA. The chain is Small ribosomal subunit protein uS7 from Nitrosomonas europaea (strain ATCC 19718 / CIP 103999 / KCTC 2705 / NBRC 14298).